The sequence spans 184 residues: uncharacterized protein (184 aa).

A signal peptide spans Met-1 to Gly-20.

This is an uncharacterized protein from Drosophila melanogaster (Fruit fly).